Consider the following 211-residue polypeptide: N-(5'-phosphoribosyl)anthranilate isomerase (211 aa).

Belongs to the TrpF family.

It catalyses the reaction N-(5-phospho-beta-D-ribosyl)anthranilate = 1-(2-carboxyphenylamino)-1-deoxy-D-ribulose 5-phosphate. It participates in amino-acid biosynthesis; L-tryptophan biosynthesis; L-tryptophan from chorismate: step 3/5. The sequence is that of N-(5'-phosphoribosyl)anthranilate isomerase from Zymomonas mobilis subsp. pomaceae (strain ATCC 29192 / DSM 22645 / JCM 10191 / CCUG 17912 / NBRC 13757 / NCIMB 11200 / NRRL B-4491 / Barker I).